A 255-amino-acid chain; its full sequence is DNA repair protein RecO (255 aa).

It belongs to the RecO family.

In terms of biological role, involved in DNA repair and RecF pathway recombination. This is DNA repair protein RecO from Bacillus velezensis (strain DSM 23117 / BGSC 10A6 / LMG 26770 / FZB42) (Bacillus amyloliquefaciens subsp. plantarum).